The sequence spans 300 residues: 4-diphosphocytidyl-2-C-methyl-D-erythritol kinase (300 aa).

The active site involves K17. 102 to 112 (PVAAGIGGGSA) contacts ATP. The active site involves D144.

It belongs to the GHMP kinase family. IspE subfamily.

It carries out the reaction 4-CDP-2-C-methyl-D-erythritol + ATP = 4-CDP-2-C-methyl-D-erythritol 2-phosphate + ADP + H(+). It functions in the pathway isoprenoid biosynthesis; isopentenyl diphosphate biosynthesis via DXP pathway; isopentenyl diphosphate from 1-deoxy-D-xylulose 5-phosphate: step 3/6. Catalyzes the phosphorylation of the position 2 hydroxy group of 4-diphosphocytidyl-2C-methyl-D-erythritol. The protein is 4-diphosphocytidyl-2-C-methyl-D-erythritol kinase of Bradyrhizobium sp. (strain ORS 278).